Reading from the N-terminus, the 323-residue chain is tRNA dimethylallyltransferase (323 aa).

Residue 27–34 (GPTGSGKT) coordinates ATP. 29-34 (TGSGKT) serves as a coordination point for substrate. 2 interaction with substrate tRNA regions span residues 52–55 (DSRQ) and 176–180 (QRIVR).

It belongs to the IPP transferase family. As to quaternary structure, monomer. It depends on Mg(2+) as a cofactor.

The enzyme catalyses adenosine(37) in tRNA + dimethylallyl diphosphate = N(6)-dimethylallyladenosine(37) in tRNA + diphosphate. In terms of biological role, catalyzes the transfer of a dimethylallyl group onto the adenine at position 37 in tRNAs that read codons beginning with uridine, leading to the formation of N6-(dimethylallyl)adenosine (i(6)A). In Desulfovibrio desulfuricans (strain ATCC 27774 / DSM 6949 / MB), this protein is tRNA dimethylallyltransferase.